We begin with the raw amino-acid sequence, 180 residues long: Ribosome maturation factor RimM (180 aa).

The PRC barrel domain occupies 99-172; the sequence is EDEFYQVDLI…FLVVDPVAAG (74 aa).

It belongs to the RimM family. Binds ribosomal protein uS19.

It localises to the cytoplasm. Its function is as follows. An accessory protein needed during the final step in the assembly of 30S ribosomal subunit, possibly for assembly of the head region. Essential for efficient processing of 16S rRNA. May be needed both before and after RbfA during the maturation of 16S rRNA. It has affinity for free ribosomal 30S subunits but not for 70S ribosomes. This is Ribosome maturation factor RimM from Bartonella henselae (strain ATCC 49882 / DSM 28221 / CCUG 30454 / Houston 1) (Rochalimaea henselae).